The following is a 470-amino-acid chain: Xaa-Pro aminopeptidase 2 (470 aa).

The Mn(2+) site is built by Asp287, Asp299, His382, Glu413, and Glu437.

This sequence belongs to the peptidase M24B family. As to quaternary structure, homodimer. Mn(2+) serves as cofactor.

The catalysed reaction is Release of any N-terminal amino acid, including proline, that is linked to proline, even from a dipeptide or tripeptide.. This chain is Xaa-Pro aminopeptidase 2 (pepP2), found in Streptomyces coelicolor (strain ATCC BAA-471 / A3(2) / M145).